The chain runs to 127 residues: Large ribosomal subunit protein bL12 (127 aa).

It belongs to the bacterial ribosomal protein bL12 family. In terms of assembly, homodimer. Part of the ribosomal stalk of the 50S ribosomal subunit. Forms a multimeric L10(L12)X complex, where L10 forms an elongated spine to which 2 to 4 L12 dimers bind in a sequential fashion. Binds GTP-bound translation factors.

In terms of biological role, forms part of the ribosomal stalk which helps the ribosome interact with GTP-bound translation factors. Is thus essential for accurate translation. The polypeptide is Large ribosomal subunit protein bL12 (Leptospira interrogans serogroup Icterohaemorrhagiae serovar copenhageni (strain Fiocruz L1-130)).